Consider the following 485-residue polypeptide: Mitochondrial metalloendopeptidase OMA1 (485 aa).

Residues 1 to 16 (MKPSLKRRLLLLSRKF) constitute a mitochondrion transit peptide. At 17–147 (AKASIRKLLR…GPGRWFQNPR (131 aa)) the chain is on the mitochondrial matrix side. A helical transmembrane segment spans residues 148–168 (TVFTVVLVGSVGLITLIVGNT). Residues 169-485 (ETIPYTKRTH…AGRTGVEGFL (317 aa)) are Mitochondrial intermembrane-facing. Residue His-352 participates in Zn(2+) binding. Residue Glu-353 is part of the active site. His-356 and Glu-405 together coordinate Zn(2+). The segment at 456-485 (KLLAQANVMEEALMIYREVQAGRTGVEGFL) is required for protease activation.

Belongs to the peptidase M48A family. In terms of assembly, homooligomer. Zn(2+) serves as cofactor.

The protein localises to the mitochondrion inner membrane. Protease that is part of the quality control system in the inner membrane of mitochondria. Metalloendopeptidase that modulates the oxidative phosphorylation (OXPHOS) system and plant growth. Involved in tolerance mechanisms to heat, osmotic and oxidative stresses. The sequence is that of Mitochondrial metalloendopeptidase OMA1 from Arabidopsis thaliana (Mouse-ear cress).